The sequence spans 299 residues: Probable inactive heme oxygenase 2, chloroplastic (299 aa).

The segment covering 1–15 has biased composition (low complexity); sequence MASLLRPTPLLSTPR. Disordered stretches follow at residues 1-20, 45-70, and 96-126; these read MASL…LTHS, LCRS…KQYP, and DLSE…EETW. Residues 1–83 constitute a chloroplast transit peptide; it reads MASLLRPTPL…IGITEEMRFV (83 aa). A compositionally biased stretch (polar residues) spans 46 to 57; that stretch reads CRSTPTPSQQKA. The segment covering 58 to 67 has biased composition (basic residues); the sequence is SQRKRTRYRK. Residues 105 to 122 show a composition bias toward acidic residues; it reads EKEEEEEEEDDDDDDEVK.

This sequence belongs to the heme oxygenase family. Widely expressed at low levels.

The protein resides in the plastid. It is found in the chloroplast. In terms of biological role, probable inactive heme oxygenase. Binds protoporphyrin IX, a precursor for both heme and chlorophyll biosynthesis. Plays a minor role in phytochrome assembly and photomorphogenesis. This is Probable inactive heme oxygenase 2, chloroplastic (HO2) from Arabidopsis thaliana (Mouse-ear cress).